The primary structure comprises 267 residues: Myxobacterial hemagglutinin (267 aa).

Repeat copies occupy residues 1–66 (MAAY…GTLS), 67–133 (SANN…SEVT), 134–200 (DGDT…GTLT), and 201–267 (SPDT…ARLG). The segment at 1–267 (MAAYLVQNQW…GPIGFRARLG (267 aa)) is 4 X 65 AA tandem repeats.

The protein belongs to the bacterial lectin family.

Functionally, this lectin might have a role in the differentiation of cells. This is Myxobacterial hemagglutinin (mbhA) from Myxococcus xanthus.